The primary structure comprises 566 residues: Arginine--tRNA ligase (566 aa).

Residues 123 to 133 (PNVAKPFHVGH) carry the 'HIGH' region motif.

It belongs to the class-I aminoacyl-tRNA synthetase family. In terms of assembly, monomer.

The protein resides in the cytoplasm. The enzyme catalyses tRNA(Arg) + L-arginine + ATP = L-arginyl-tRNA(Arg) + AMP + diphosphate. The sequence is that of Arginine--tRNA ligase from Alkaliphilus metalliredigens (strain QYMF).